We begin with the raw amino-acid sequence, 402 residues long: Renin (402 aa).

Residues 1-26 (MGGRRMPLWALLLLWTSCSFSLPTDT) form the signal peptide. A propeptide spans 27 to 64 (ASFGRILLKKMPSVREILEERGVDMTRISAEWGEFIKK) (activation peptide). Residue asparagine 69 is glycosylated (N-linked (GlcNAc...) asparagine). In terms of domain architecture, Peptidase A1 spans 84 to 399 (YYGEIGIGTP…DRHNNRIGFA (316 aa)). Aspartate 102 is a catalytic residue. A disulfide bridge links cysteine 115 with cysteine 122. A glycan (N-linked (GlcNAc...) asparagine) is linked at asparagine 139. Cysteine 278 and cysteine 282 form a disulfide bridge. The active site involves aspartate 287. Asparagine 320 carries an N-linked (GlcNAc...) asparagine glycan. Cysteine 321 and cysteine 358 are oxidised to a cystine.

Belongs to the peptidase A1 family. In terms of assembly, interacts with ATP6AP2.

Its subcellular location is the secreted. It is found in the membrane. It carries out the reaction Cleavage of Leu-|-Xaa bond in angiotensinogen to generate angiotensin I.. Its activity is regulated as follows. Interaction with ATP6AP2 results in a 5-fold increased efficiency in angiotensinogen processing. Its function is as follows. Renin is a highly specific endopeptidase, whose only known function is to generate angiotensin I from angiotensinogen in the plasma, initiating a cascade of reactions that produce an elevation of blood pressure and increased sodium retention by the kidney. This chain is Renin (Ren1), found in Rattus norvegicus (Rat).